Here is a 377-residue protein sequence, read N- to C-terminus: Virion membrane protein A16 (377 aa).

Gly-2 carries N-myristoyl glycine; by host lipidation. At 2–341 (GAAVTLNRIK…VVKDKIKLPT (340 aa)) the chain is on the virion surface side. A helical; Signal-anchor for type II membrane protein membrane pass occupies residues 342 to 362 (WLGAAITLVVISVIFYFISIY). Residues 363-377 (SRTKIKTNDINVRRR) lie on the Intravirion side of the membrane.

The protein belongs to the poxviridae A16/G9/J5 family. Part of a stable entry-fusion complex (EFC) which is at least composed of proteins A16, A21, A28, G3, G9, H2, J5, and L5. Formation of the viral membrane is necessary for the assembly of the complex. Interacts with G9. Post-translationally, most cysteines are linked by disulfide bonds. They are created by the viral disulfide bond formation pathway, a poxvirus-specific redox pathway that operates on the cytoplasmic side of the MV membranes.

It localises to the virion membrane. Functionally, envelope protein part of the entry-fusion complex responsible for the virus membrane fusion with host cell membrane during virus entry. Also plays a role in cell-cell fusion (syncytium formation). This Homo sapiens (Human) protein is Virion membrane protein A16.